The chain runs to 334 residues: MCDSSQSTADVLIIGGGPAGSNAAWELGQAHHRVILFNASIDRLRDPDVNTASTRPALDLLLHSRRKTPDVFRPFRQEIGKESSEVSVHNQRITQVQRLPNGFFQAEDDVGHVWTAKVLVLADGAEEILPDIDGYDTCWEQQRILTHPAEDEPRSLISSCLAVLAVGDLAELTMALHTVWQARQFAASVRVYTHGDEDLARALETRISPDARIAIQTTPIQSLQPGSDSPSQVVVHLADGSSIVESHVYHRPASQLQGPFARQLNLELTESGAIRISARVPYMTSLDGVYAGGDCASLGQRTLFKALAMGQGLAAAVAARLERGNWGNAVEEQD.

Residues 16–19 (GGPA), 38–43 (NASIDR), I93, A122, D294, and 302–303 (TL) contribute to the FAD site.

This sequence belongs to the class-II pyridine nucleotide-disulfide oxidoreductase family. As to quaternary structure, homodimer. FAD serves as cofactor.

The protein operates within mycotoxin biosynthesis. Thioredoxin reductase; part of the gene cluster that mediates the biosynthesis of aspirochlorine (or antibiotic A30641), an unusual halogenated spiro compound with distinctive antifungal properties due to selective inhibition of protein biosynthesis, and which is also active against bacteria, viruses, and murine tumor cells. The non-ribosomal peptide synthetase (NRPS) aclP is responsible the formation of the diketopiperazine (DKP) core from the condensation of 2 phenylalanine residues. One Phe residue is tailored into chlorotyrosine by hydroxylation and chlorination, whereas the second Phe undergoes an unprecedented C-C bond cleavage to be converted into glycine. After formation of the DKP, sulfur is incorporated into the DKP by conjugation with glutathione by aclG, followed by its stepwise degradation to the thiol by aclI, aclJ and aclK, and the dithiol oxidation by aclT. In addition, oxygenases (aclB, aclC, aclL and aclO) and O-methyltransferases (aclM and aclU) act as tailoring enzymes to produce the intermediate dechloroaspirochlorine. Ultimately, chlorination of dechloroaspirochlorine by the halogenase aclH is the last step in the aspirochlorine pathway. This Aspergillus oryzae (strain ATCC 42149 / RIB 40) (Yellow koji mold) protein is Thioredoxin reductase aclT.